The primary structure comprises 185 residues: Elongation factor P (185 aa).

This sequence belongs to the elongation factor P family.

The protein localises to the cytoplasm. It participates in protein biosynthesis; polypeptide chain elongation. In terms of biological role, involved in peptide bond synthesis. Stimulates efficient translation and peptide-bond synthesis on native or reconstituted 70S ribosomes in vitro. Probably functions indirectly by altering the affinity of the ribosome for aminoacyl-tRNA, thus increasing their reactivity as acceptors for peptidyl transferase. In Thermotoga maritima (strain ATCC 43589 / DSM 3109 / JCM 10099 / NBRC 100826 / MSB8), this protein is Elongation factor P (efp).